A 257-amino-acid polypeptide reads, in one-letter code: Imidazole glycerol phosphate synthase subunit HisF (257 aa).

Residues D11 and D130 contribute to the active site.

Belongs to the HisA/HisF family. Heterodimer of HisH and HisF.

It localises to the cytoplasm. It catalyses the reaction 5-[(5-phospho-1-deoxy-D-ribulos-1-ylimino)methylamino]-1-(5-phospho-beta-D-ribosyl)imidazole-4-carboxamide + L-glutamine = D-erythro-1-(imidazol-4-yl)glycerol 3-phosphate + 5-amino-1-(5-phospho-beta-D-ribosyl)imidazole-4-carboxamide + L-glutamate + H(+). Its pathway is amino-acid biosynthesis; L-histidine biosynthesis; L-histidine from 5-phospho-alpha-D-ribose 1-diphosphate: step 5/9. IGPS catalyzes the conversion of PRFAR and glutamine to IGP, AICAR and glutamate. The HisF subunit catalyzes the cyclization activity that produces IGP and AICAR from PRFAR using the ammonia provided by the HisH subunit. The sequence is that of Imidazole glycerol phosphate synthase subunit HisF from Shewanella sp. (strain W3-18-1).